Reading from the N-terminus, the 476-residue chain is Ribulose bisphosphate carboxylase large chain (476 aa).

Positions 1-2 (MS) are excised as a propeptide. Residue Pro3 is modified to N-acetylproline. At Lys14 the chain carries N6,N6,N6-trimethyllysine. Positions 123 and 173 each coordinate substrate. Lys175 functions as the Proton acceptor in the catalytic mechanism. Lys177 contributes to the substrate binding site. Residues Lys201, Asp203, and Glu204 each contribute to the Mg(2+) site. Lys201 bears the N6-carboxylysine mark. His294 (proton acceptor) is an active-site residue. The substrate site is built by Arg295, His327, and Ser379.

The protein belongs to the RuBisCO large chain family. Type I subfamily. In terms of assembly, heterohexadecamer of 8 large chains and 8 small chains; disulfide-linked. The disulfide link is formed within the large subunit homodimers. It depends on Mg(2+) as a cofactor. The disulfide bond which can form in the large chain dimeric partners within the hexadecamer appears to be associated with oxidative stress and protein turnover.

The protein resides in the plastid. It localises to the chloroplast. The catalysed reaction is 2 (2R)-3-phosphoglycerate + 2 H(+) = D-ribulose 1,5-bisphosphate + CO2 + H2O. The enzyme catalyses D-ribulose 1,5-bisphosphate + O2 = 2-phosphoglycolate + (2R)-3-phosphoglycerate + 2 H(+). In terms of biological role, ruBisCO catalyzes two reactions: the carboxylation of D-ribulose 1,5-bisphosphate, the primary event in carbon dioxide fixation, as well as the oxidative fragmentation of the pentose substrate in the photorespiration process. Both reactions occur simultaneously and in competition at the same active site. The polypeptide is Ribulose bisphosphate carboxylase large chain (Liriodendron tulipifera (Tuliptree)).